The following is a 361-amino-acid chain: Phospho-N-acetylmuramoyl-pentapeptide-transferase (361 aa).

A run of 10 helical transmembrane segments spans residues 27–47 (GAMV…IDHL), 72–92 (TPTM…LLWA), 94–114 (LHNP…FVGF), 133–153 (LRLA…IWAG), 169–189 (FAIN…VGAG), 200–220 (GLAI…AYLV), 240–260 (LAVL…FNAP), 264–284 (IFMG…IAVA), 289–309 (IVLA…IVQV), and 338–358 (QIVI…LSTL).

It belongs to the glycosyltransferase 4 family. MraY subfamily. The cofactor is Mg(2+).

The protein localises to the cell inner membrane. The enzyme catalyses UDP-N-acetyl-alpha-D-muramoyl-L-alanyl-gamma-D-glutamyl-meso-2,6-diaminopimeloyl-D-alanyl-D-alanine + di-trans,octa-cis-undecaprenyl phosphate = di-trans,octa-cis-undecaprenyl diphospho-N-acetyl-alpha-D-muramoyl-L-alanyl-D-glutamyl-meso-2,6-diaminopimeloyl-D-alanyl-D-alanine + UMP. The protein operates within cell wall biogenesis; peptidoglycan biosynthesis. Its function is as follows. Catalyzes the initial step of the lipid cycle reactions in the biosynthesis of the cell wall peptidoglycan: transfers peptidoglycan precursor phospho-MurNAc-pentapeptide from UDP-MurNAc-pentapeptide onto the lipid carrier undecaprenyl phosphate, yielding undecaprenyl-pyrophosphoryl-MurNAc-pentapeptide, known as lipid I. The protein is Phospho-N-acetylmuramoyl-pentapeptide-transferase of Afipia carboxidovorans (strain ATCC 49405 / DSM 1227 / KCTC 32145 / OM5) (Oligotropha carboxidovorans).